The following is a 271-amino-acid chain: Transmembrane protein 33 homolog (271 aa).

Residues 1 to 32 (MVEIVEEPDDHQSSSTGAGSSGSSSAPPPPPP) are disordered. Positions 13–25 (SSSTGAGSSGSSS) are enriched in low complexity. The next 3 membrane-spanning stretches (helical) occupy residues 56–76 (VLTV…VPAH), 125–145 (VVFL…IYAA), and 180–200 (ALGI…SLIF).

This sequence belongs to the PER33/POM33 family.

It localises to the membrane. This chain is Transmembrane protein 33 homolog, found in Caenorhabditis elegans.